The sequence spans 290 residues: Nucleoid occlusion protein (290 aa).

The segment at residues glutamate 153–leucine 172 is a DNA-binding region (H-T-H motif).

This sequence belongs to the ParB family.

Its subcellular location is the cytoplasm. It localises to the nucleoid. Effects nucleoid occlusion by binding relatively nonspecifically to DNA and preventing the assembly of the division machinery in the vicinity of the nucleoid, especially under conditions that disturb the cell cycle. It helps to coordinate cell division and chromosome segregation by preventing the formation of the Z ring through the nucleoid, which would cause chromosome breakage. This is Nucleoid occlusion protein from Bacillus cereus (strain AH187).